Consider the following 37-residue polypeptide: Protamine Z3 (37 aa).

The interval 1 to 37 (ARSRSRRSYGRGRRRGGRRRRRRRRRRRGGRRGRRSR) is disordered.

In terms of tissue distribution, testis.

Its subcellular location is the nucleus. The protein localises to the chromosome. Protamines substitute for histones in the chromatin of sperm during the haploid phase of spermatogenesis. They compact sperm DNA into a highly condensed, stable and inactive complex. The protein is Protamine Z3 of Scyliorhinus canicula (Small-spotted catshark).